Consider the following 167-residue polypeptide: Protein archease (167 aa).

The residue at position 2 (A2) is an N-acetylalanine. The Ca(2+) site is built by D39, D166, and I167.

The protein belongs to the archease family. Component of the tRNA-splicing ligase complex.

In terms of biological role, component of the tRNA-splicing ligase complex required to facilitate the enzymatic turnover of catalytic subunit RTCB. Together with DDX1, acts by facilitating the guanylylation of RTCB, a key intermediate step in tRNA ligation. This chain is Protein archease (ZBTB8OS), found in Bos taurus (Bovine).